Here is a 303-residue protein sequence, read N- to C-terminus: GTP cyclohydrolase FolE2 (303 aa).

This sequence belongs to the GTP cyclohydrolase IV family.

The catalysed reaction is GTP + H2O = 7,8-dihydroneopterin 3'-triphosphate + formate + H(+). Its pathway is cofactor biosynthesis; 7,8-dihydroneopterin triphosphate biosynthesis; 7,8-dihydroneopterin triphosphate from GTP: step 1/1. In terms of biological role, converts GTP to 7,8-dihydroneopterin triphosphate. The protein is GTP cyclohydrolase FolE2 of Exiguobacterium sp. (strain ATCC BAA-1283 / AT1b).